The following is a 141-amino-acid chain: MPPHVDDVMKLCCELSANQQVKTAVKQSGKGAAAAGGLAFAGGLIGGPLGIAVGGAVGGLLGCWMKSGQFKPLPQVIMELTPDQQARLYEDIVAILGSITWTDVAQLTALVMGNASLQQQVTAALLSYIHKELQAEVHYID.

Residues 37–57 (GLAFAGGLIGGPLGIAVGGAV) form a helical membrane-spanning segment.

This sequence belongs to the C19orf12 family.

It is found in the mitochondrion. The protein localises to the mitochondrion membrane. Its subcellular location is the endoplasmic reticulum. It localises to the cytoplasm. The protein resides in the cytosol. The polypeptide is Protein C19orf12 homolog (Danio rerio (Zebrafish)).